Reading from the N-terminus, the 588-residue chain is Endogenous retrovirus group K member 7 Env polyprotein (588 aa).

The fusion peptide stretch occupies residues 355 to 375 (FIFTLIAVIMGLIAVTATAAV). The helical transmembrane segment at 522 to 542 (IGSTTIINLILILVCLFCLLL) threads the bilayer.

The protein belongs to the beta type-B retroviral envelope protein family. HERV class-II K(HML-2) env subfamily. In terms of assembly, the surface (SU) and transmembrane (TM) proteins form a heterodimer. SU and TM are attached by noncovalent interactions or by a labile interchain disulfide bond. Specific enzymatic cleavages in vivo yield the mature SU and TM proteins. As to expression, expressed in lung, placenta, testis and peripheral blood lymphocytes.

It localises to the virion. It is found in the cell membrane. Its function is as follows. Retroviral envelope proteins mediate receptor recognition and membrane fusion during early infection. Endogenous envelope proteins may have kept, lost or modified their original function during evolution. Functionally, SU mediates receptor recognition. In terms of biological role, TM anchors the envelope heterodimer to the viral membrane through one transmembrane domain. The other hydrophobic domain, called fusion peptide, mediates fusion of the viral membrane with the target cell membrane. This chain is Endogenous retrovirus group K member 7 Env polyprotein (ERVK-7), found in Homo sapiens (Human).